A 107-amino-acid polypeptide reads, in one-letter code: MSTATRPSSSATTSVILENPVSQSQPTERLVLRLNRKKKKVSWKDGTVDNEFMQKKSSKKCCIFHKQKPFDEDDSEEEDDNNHHCDHNHEHSESGEASSSNDSKAVD.

Positions 1–14 (MSTATRPSSSATTS) are enriched in low complexity. 2 disordered regions span residues 1–40 (MSTA…KKKK) and 69–107 (PFDE…KAVD). A compositionally biased stretch (acidic residues) spans 71 to 80 (DEDDSEEEDD). The segment covering 81-94 (NNHHCDHNHEHSES) has biased composition (basic and acidic residues). A compositionally biased stretch (low complexity) spans 95–107 (GEASSSNDSKAVD).

In terms of assembly, interacts with protein phosphatase 1. In terms of tissue distribution, expressed in roots, cotyledons, leaves, flowers and embryos.

Functionally, inhibitor of protein-phosphatase 1 (PP1). Binds to and inhibits PP1 activity. Required for early embryogenesis progression. The polypeptide is Protein phosphatase 1 regulatory subunit INH3 (Arabidopsis thaliana (Mouse-ear cress)).